The chain runs to 142 residues: Low molecular weight protein-tyrosine-phosphatase Ptp (142 aa).

Cys10 acts as the Nucleophile in catalysis. Arg16 is a catalytic residue. The active-site Proton donor is the Asp115.

The protein belongs to the low molecular weight phosphotyrosine protein phosphatase family.

The enzyme catalyses O-phospho-L-tyrosyl-[protein] + H2O = L-tyrosyl-[protein] + phosphate. Its pathway is glycan metabolism; exopolysaccharide biosynthesis. With respect to regulation, inhibited by ammonium molybdate, sodium orthovanadate, N-ethylmaleimide and iodoacetic acid. Functionally, dephosphorylates ptk. May be involved in the production and the transport of exopolysaccharides. This is Low molecular weight protein-tyrosine-phosphatase Ptp (ptp) from Acinetobacter johnsonii.